Reading from the N-terminus, the 584-residue chain is Pectinesterase 3 (584 aa).

The signal sequence occupies residues 1–50; sequence MTRIKEFFTKLSESSTNQNISNIPKKKKKLFLALFATLLVVAAVIGIVAG. Positions 51–266 are excised as a propeptide; it reads VNSRKNSGDN…LSTGDRRLLQ (216 aa). N-linked (GlcNAc...) asparagine glycosylation is found at asparagine 108, asparagine 129, and asparagine 226. Residues threonine 348 and glutamine 378 each contribute to the substrate site. Catalysis depends on aspartate 401, which acts as the Proton donor. A disulfide bond links cysteine 415 and cysteine 435. Aspartate 422 acts as the Nucleophile in catalysis. The substrate site is built by arginine 490 and tryptophan 492.

It in the N-terminal section; belongs to the PMEI family. This sequence in the C-terminal section; belongs to the pectinesterase family. In the peel, expression is localized to the region of the flavedo close to the oil glands, and to the innermost layer of the albedo. In the lamella, expression is localized to the cell layers opposing the fruit tissue, and to the parenchyma surrounding the vascular tissue. In the fruit vesicles, expression is restricted to the peripheral cell layers and stalk cells. High levels of expression are detected in the core matrix.

The protein resides in the secreted. Its subcellular location is the cell wall. The enzyme catalyses [(1-&gt;4)-alpha-D-galacturonosyl methyl ester](n) + n H2O = [(1-&gt;4)-alpha-D-galacturonosyl](n) + n methanol + n H(+). It functions in the pathway glycan metabolism; pectin degradation; 2-dehydro-3-deoxy-D-gluconate from pectin: step 1/5. Acts in the modification of cell walls via demethylesterification of cell wall pectin. This is Pectinesterase 3 from Citrus sinensis (Sweet orange).